A 191-amino-acid chain; its full sequence is Flagellar transcriptional regulator FlhC (191 aa).

Positions 137, 140, 157, and 160 each coordinate Zn(2+).

Belongs to the FlhC family. In terms of assembly, heterohexamer composed of two FlhC and four FlhD subunits. Each FlhC binds a FlhD dimer, forming a heterotrimer, and a hexamer assembles by dimerization of two heterotrimers. The cofactor is Zn(2+).

The protein resides in the cytoplasm. Its function is as follows. Functions in complex with FlhD as a master transcriptional regulator that regulates transcription of several flagellar and non-flagellar operons by binding to their promoter region. Activates expression of class 2 flagellar genes, including fliA, which is a flagellum-specific sigma factor that turns on the class 3 genes. Also regulates genes whose products function in a variety of physiological pathways. The protein is Flagellar transcriptional regulator FlhC of Nitrosomonas eutropha (strain DSM 101675 / C91 / Nm57).